A 1123-amino-acid chain; its full sequence is Rabphilin-1 (1123 aa).

Positions 1–17 (MTKSTKLRHCKQKKKKP) are enriched in basic residues. Disordered regions lie at residues 1-56 (MTKS…GSRS) and 88-140 (SAHN…PSTH). Positions 36 to 46 (DAATTTSTTDA) are enriched in low complexity. A RabBD domain is found at 215-341 (KAQTGSITAA…KKSGAWFYKE (127 aa)). The FYVE-type zinc-finger motif lies at 263 to 328 (GNGVTHCLLC…LCKICSEARE (66 aa)). Residues Cys269, Cys272, Cys288, Cys291, Cys296, Cys300, Cys320, and Cys323 each contribute to the Zn(2+) site. 4 stretches are compositionally biased toward polar residues: residues 365 to 375 (PNASSAATPLS), 387 to 400 (TMPS…TTPK), 410 to 428 (PGLQ…GTRR), and 487 to 497 (ASSSDGESFVQ). Disordered stretches follow at residues 365-710 (PNAS…VGSA), 737-779 (TSRA…LRTS), and 796-818 (HIVS…VPIP). Over residues 531–541 (SRREANMERFS) the composition is skewed to basic and acidic residues. A compositionally biased stretch (low complexity) spans 563-574 (ESRPSTRSTSPR). Composition is skewed to polar residues over residues 605-632 (VVQS…QQQA) and 649-666 (PDRT…TSLV). The segment covering 742-753 (SPLAASSSFLSS) has biased composition (low complexity). Positions 756-768 (DDTKQKNRRRDGV) are enriched in basic and acidic residues. Residues 803–818 (TSSTTSNQNHTSVPIP) are compositionally biased toward low complexity. 2 consecutive C2 domains span residues 844–967 (SLGS…NLYL) and 984–1103 (DRGK…RQWI). Ca(2+) contacts are provided by Asp875, Asp881, Asp936, Asp938, Asp943, Asp1015, Asp1021, Asp1075, Asp1077, and Asp1083.

The cofactor is Ca(2+).

It localises to the synapse. Functionally, rab-3 effector. The protein is Rabphilin-1 (rbf-1) of Caenorhabditis elegans.